The following is a 59-amino-acid chain: UPF0434 protein Noc_2677 (59 aa).

The protein belongs to the UPF0434 family.

This chain is UPF0434 protein Noc_2677, found in Nitrosococcus oceani (strain ATCC 19707 / BCRC 17464 / JCM 30415 / NCIMB 11848 / C-107).